A 713-amino-acid polypeptide reads, in one-letter code: UvrABC system protein B (713 aa).

The 387-residue stretch at 35–421 (RRIRAGEKDV…GDGFVEQIIR (387 aa)) folds into the Helicase ATP-binding domain. 48–55 (GATGTGKS) serves as a coordination point for ATP. A Beta-hairpin motif is present at residues 101 to 124 (YYDYYQPEAYVPQSDTYIEKDSSI). The 167-residue stretch at 438 to 604 (QIDDLVHEIR…PLRKKINDIV (167 aa)) folds into the Helicase C-terminal domain. The interval 624–663 (QAKDGKGAKAPVPSLGGKAAAKGAKSAKGKAKETVPTDRP) is disordered. Low complexity predominate over residues 639–649 (GGKAAAKGAKS). The segment covering 653 to 663 (KAKETVPTDRP) has biased composition (basic and acidic residues). Residues 668 to 703 (AEEIEELTNRMRAAAADLQFEIAARLRDEVSEMKKE) enclose the UVR domain.

This sequence belongs to the UvrB family. Forms a heterotetramer with UvrA during the search for lesions. Interacts with UvrC in an incision complex.

The protein localises to the cytoplasm. The UvrABC repair system catalyzes the recognition and processing of DNA lesions. A damage recognition complex composed of 2 UvrA and 2 UvrB subunits scans DNA for abnormalities. Upon binding of the UvrA(2)B(2) complex to a putative damaged site, the DNA wraps around one UvrB monomer. DNA wrap is dependent on ATP binding by UvrB and probably causes local melting of the DNA helix, facilitating insertion of UvrB beta-hairpin between the DNA strands. Then UvrB probes one DNA strand for the presence of a lesion. If a lesion is found the UvrA subunits dissociate and the UvrB-DNA preincision complex is formed. This complex is subsequently bound by UvrC and the second UvrB is released. If no lesion is found, the DNA wraps around the other UvrB subunit that will check the other stand for damage. In Streptomyces avermitilis (strain ATCC 31267 / DSM 46492 / JCM 5070 / NBRC 14893 / NCIMB 12804 / NRRL 8165 / MA-4680), this protein is UvrABC system protein B.